Reading from the N-terminus, the 109-residue chain is Large ribosomal subunit protein P1 (109 aa).

Residues alanine 90–aspartate 109 form a disordered region.

It belongs to the eukaryotic ribosomal protein P1/P2 family. In terms of assembly, P1 and P2 exist as dimers at the large ribosomal subunit.

Functionally, plays an important role in the elongation step of protein synthesis. The chain is Large ribosomal subunit protein P1 from Trypanosoma cruzi.